Here is a 36-residue protein sequence, read N- to C-terminus: Egg-laying hormone (36 aa).

Lysine 36 carries the lysine amide modification.

It belongs to the molluscan ELH family. Bag cell neurons.

It localises to the secreted. Its function is as follows. ELH acts as a neurotransmitter locally, upon neurons of the abdominal ganglion and as a hormone by diffusing into the circulating hemolymph and modulating the activity of other organs. It specifically causes contraction of smooth muscle in the ovotestis and expulsion of the egg string. In Aplysia fasciata (Mottled sea hare), this protein is Egg-laying hormone.